The sequence spans 320 residues: Taste receptor type 2 member 129 (320 aa).

The Extracellular segment spans residues 1 to 8; it reads MDGIVQNM. Residues 9–29 traverse the membrane as a helical segment; sequence FTFIVIVEIIIGWIGNGFIAL. Residues 30–55 lie on the Cytoplasmic side of the membrane; the sequence is VNCIHWYKRRKISALNQILTALAFSR. The helical transmembrane segment at 56–76 threads the bilayer; it reads IYLLLTVFTVIAVSTLYTHVL. The Extracellular segment spans residues 77-88; that stretch reads VTRRVVKLINFH. The helical transmembrane segment at 89–109 threads the bilayer; the sequence is LLFSNHFSMWLAACLGLYYFL. The Cytoplasmic segment spans residues 110-128; the sequence is KIAHFPNSIFVYLKMRINQ. Residues 129–149 traverse the membrane as a helical segment; that stretch reads VVSGTLLMSLGLLFLNTLLIN. The Extracellular segment spans residues 150-185; the sequence is SYIDTKIDDYREHLLYDFTSNNTASFYRVILVINNC. Asn170 carries N-linked (GlcNAc...) asparagine glycosylation. The chain crosses the membrane as a helical span at residues 186 to 206; it reads IFTSIPFTLSQSTFLLLIFSL. The Cytoplasmic segment spans residues 207-233; it reads WRHYKKMQQHAQRCRDVLADAHIRVLQ. The helical transmembrane segment at 234 to 254 threads the bilayer; that stretch reads TMVTYVLLCAIFFLSLSMQIL. The Extracellular segment spans residues 255–264; it reads RSELLKNILY. A helical membrane pass occupies residues 265-285; the sequence is VRFCEIVAAVFPSGHSCVLIC. Residues 286 to 320 are Cytoplasmic-facing; it reads RDTNLRGTFLSVLSWLKQRFTSWIPNINCRSSCIF.

This sequence belongs to the G-protein coupled receptor T2R family.

It localises to the membrane. In terms of biological role, putative taste receptor which may play a role in the perception of bitterness. In Mus musculus (Mouse), this protein is Taste receptor type 2 member 129.